We begin with the raw amino-acid sequence, 503 residues long: Glutamate/gamma-aminobutyrate antiporter (503 aa).

33–43 lines the L-glutamate pocket; it reads LHLVFFLLLGG. Transmembrane regions (helical) follow at residues 35–55, 153–173, 194–214, 232–252, 366–386, 407–427, and 440–460; these read LVFFLLLGGLLWFLPVALCAA, FVVGIVIPSVILFGLAAAYFI, VSTLVVFVSFILAYMGVEASA, ILLVILAISLDAIGGFSVAAV, LTVVIYLVGYLLFFIVYFVLI, IIAGIGFLLSIFALFISFVPP, and MILLISFVVTAILPFIIYELH.

This sequence belongs to the amino acid-polyamine-organocation (APC) superfamily. Glutamate:GABA antiporter (GGA) (TC 2.A.3.7) family.

It is found in the cell membrane. The catalysed reaction is 4-aminobutanoate(in) + L-glutamate(out) = 4-aminobutanoate(out) + L-glutamate(in). Functionally, involved in glutaminase-dependent acid resistance. Exchanges extracellular glutamate (Glu) for intracellular gamma-aminobutyric acid (GABA) under acidic conditions. The protein is Glutamate/gamma-aminobutyrate antiporter of Lactococcus lactis subsp. cremoris (strain MG1363).